Reading from the N-terminus, the 312-residue chain is Malate dehydrogenase (312 aa).

NAD(+) contacts are provided by residues 7–13 and Asp34; that span reads GAAGGIG. The substrate site is built by Arg81 and Arg87. Residues Asn94 and 117-119 each bind NAD(+); that span reads ITN. Substrate contacts are provided by Asn119 and Arg153. His177 acts as the Proton acceptor in catalysis. Met227 lines the NAD(+) pocket.

This sequence belongs to the LDH/MDH superfamily. MDH type 1 family. As to quaternary structure, homodimer.

The catalysed reaction is (S)-malate + NAD(+) = oxaloacetate + NADH + H(+). Functionally, catalyzes the reversible oxidation of malate to oxaloacetate. The sequence is that of Malate dehydrogenase from Escherichia coli (strain SE11).